Here is a 457-residue protein sequence, read N- to C-terminus: Siroheme synthase (457 aa).

The tract at residues 1-204 (MDHLPIFCQL…NDQKAITETT (204 aa)) is precorrin-2 dehydrogenase /sirohydrochlorin ferrochelatase. NAD(+) contacts are provided by residues 22 to 23 (DV) and 43 to 44 (LA). Phosphoserine is present on Ser-128. The interval 216-457 (GEVVLVGAGP…RDKLNWFSNH (242 aa)) is uroporphyrinogen-III C-methyltransferase. S-adenosyl-L-methionine is bound at residue Pro-225. The Proton acceptor role is filled by Asp-248. Lys-270 acts as the Proton donor in catalysis. S-adenosyl-L-methionine contacts are provided by residues 301–303 (GGD), Ile-306, 331–332 (TA), Met-382, and Gly-411.

It in the N-terminal section; belongs to the precorrin-2 dehydrogenase / sirohydrochlorin ferrochelatase family. In the C-terminal section; belongs to the precorrin methyltransferase family.

The enzyme catalyses uroporphyrinogen III + 2 S-adenosyl-L-methionine = precorrin-2 + 2 S-adenosyl-L-homocysteine + H(+). It catalyses the reaction precorrin-2 + NAD(+) = sirohydrochlorin + NADH + 2 H(+). The catalysed reaction is siroheme + 2 H(+) = sirohydrochlorin + Fe(2+). It functions in the pathway cofactor biosynthesis; adenosylcobalamin biosynthesis; precorrin-2 from uroporphyrinogen III: step 1/1. Its pathway is cofactor biosynthesis; adenosylcobalamin biosynthesis; sirohydrochlorin from precorrin-2: step 1/1. It participates in porphyrin-containing compound metabolism; siroheme biosynthesis; precorrin-2 from uroporphyrinogen III: step 1/1. The protein operates within porphyrin-containing compound metabolism; siroheme biosynthesis; siroheme from sirohydrochlorin: step 1/1. It functions in the pathway porphyrin-containing compound metabolism; siroheme biosynthesis; sirohydrochlorin from precorrin-2: step 1/1. Its function is as follows. Multifunctional enzyme that catalyzes the SAM-dependent methylations of uroporphyrinogen III at position C-2 and C-7 to form precorrin-2 via precorrin-1. Then it catalyzes the NAD-dependent ring dehydrogenation of precorrin-2 to yield sirohydrochlorin. Finally, it catalyzes the ferrochelation of sirohydrochlorin to yield siroheme. The chain is Siroheme synthase from Escherichia coli O81 (strain ED1a).